The chain runs to 701 residues: Glycine--tRNA ligase beta subunit (701 aa).

Belongs to the class-II aminoacyl-tRNA synthetase family. As to quaternary structure, tetramer of two alpha and two beta subunits.

The protein resides in the cytoplasm. It carries out the reaction tRNA(Gly) + glycine + ATP = glycyl-tRNA(Gly) + AMP + diphosphate. The chain is Glycine--tRNA ligase beta subunit from Anaeromyxobacter dehalogenans (strain 2CP-C).